The sequence spans 280 residues: uncharacterized protein (280 aa).

To E.coli YgfZ (UP14) and B.aphidicola (subsp. Acyrthosiphon pisum) BU435.

This is an uncharacterized protein from Haemophilus influenzae (strain ATCC 51907 / DSM 11121 / KW20 / Rd).